A 434-amino-acid chain; its full sequence is Putative neutral sphingomyelinase (434 aa).

E83 contributes to the Mg(2+) binding site. Residue H318 is the Proton acceptor of the active site. Helical transmembrane passes span 366 to 388 and 392 to 414; these read IFFF…FEVF and FAVL…LIGL.

This sequence belongs to the neutral sphingomyelinase family.

It is found in the membrane. It catalyses the reaction an N-(acyl)-sphingosylphosphocholine + H2O = an N-acyl-sphingoid base + phosphocholine + H(+). The enzyme catalyses a sphingomyelin + H2O = phosphocholine + an N-acylsphing-4-enine + H(+). The catalysed reaction is an N-acyl-15-methylhexadecasphing-4-enine-1-phosphocholine + H2O = an N-acyl-15-methylhexadecasphing-4-enine + phosphocholine + H(+). Its pathway is lipid metabolism; sphingolipid metabolism. Functionally, catalyzes the hydrolysis of sphingomyelin producing a ceramide (N-acyl-sphingoid base) and a phosphocholine. C.elegans contain specific sphingoid bases, which are unique or different in structure compared to the sphingoid bases found in other animals. Two examples of these distinctive compounds are: 15-methylhexadecasphinganine and 15-methylhexadecasphing-4-enine. The polypeptide is Putative neutral sphingomyelinase (Caenorhabditis elegans).